Here is an 883-residue protein sequence, read N- to C-terminus: Phosphoenolpyruvate carboxylase (883 aa).

Catalysis depends on residues His-138 and Lys-546.

Belongs to the PEPCase type 1 family. Requires Mg(2+) as cofactor.

The catalysed reaction is oxaloacetate + phosphate = phosphoenolpyruvate + hydrogencarbonate. Forms oxaloacetate, a four-carbon dicarboxylic acid source for the tricarboxylic acid cycle. This Salmonella paratyphi A (strain ATCC 9150 / SARB42) protein is Phosphoenolpyruvate carboxylase.